Consider the following 377-residue polypeptide: Succinyl-diaminopimelate desuccinylase (377 aa).

His67 lines the Zn(2+) pocket. Asp69 is a catalytic residue. A Zn(2+)-binding site is contributed by Asp100. The active-site Proton acceptor is the Glu134. The Zn(2+) site is built by Glu135, Glu163, and His349.

This sequence belongs to the peptidase M20A family. DapE subfamily. Homodimer. Zn(2+) is required as a cofactor. Requires Co(2+) as cofactor.

The catalysed reaction is N-succinyl-(2S,6S)-2,6-diaminopimelate + H2O = (2S,6S)-2,6-diaminopimelate + succinate. Its pathway is amino-acid biosynthesis; L-lysine biosynthesis via DAP pathway; LL-2,6-diaminopimelate from (S)-tetrahydrodipicolinate (succinylase route): step 3/3. Catalyzes the hydrolysis of N-succinyl-L,L-diaminopimelic acid (SDAP), forming succinate and LL-2,6-diaminopimelate (DAP), an intermediate involved in the bacterial biosynthesis of lysine and meso-diaminopimelic acid, an essential component of bacterial cell walls. In Buchnera aphidicola subsp. Baizongia pistaciae (strain Bp), this protein is Succinyl-diaminopimelate desuccinylase.